A 75-amino-acid chain; its full sequence is SPbeta prophage-derived uncharacterized protein YorX (75 aa).

This chain is SPbeta prophage-derived uncharacterized protein YorX (yorX), found in Bacillus subtilis (strain 168).